The chain runs to 145 residues: Aminoglycoside N(6')-acetyltransferase type 1 (145 aa).

Residues 1–145 (MDIRQMNKTH…ERVIFYRKRC (145 aa)) enclose the N-acetyltransferase domain. Substrate-binding residues include Trp-22, His-25, Tyr-66, and Glu-79. Residues 81–83 (IFV) and 89–94 (QRGVAK) contribute to the acetyl-CoA site. Asp-115 contributes to the substrate binding site. Asn-120 contacts acetyl-CoA. Substrate is bound at residue Glu-136.

In terms of assembly, homodimer.

The catalysed reaction is kanamycin B + acetyl-CoA = N(6')-acetylkanamycin B + CoA + H(+). In terms of biological role, catalyzes the transfer of an acetyl group from acetyl-CoA to the 6'-amino group of aminoglycoside molecules conferring resistance to antibiotics containing the purpurosamine ring including amikacin, tobramycin, dibekacin and ribostamycin. Able to acetylate eukaryotic histone proteins. The polypeptide is Aminoglycoside N(6')-acetyltransferase type 1 (Salmonella enteritidis).